The following is a 968-amino-acid chain: RNA polymerase-associated protein RapA (968 aa).

In terms of domain architecture, Helicase ATP-binding spans 163–332 (EVGRRYAPRV…FARLRLLDPD (170 aa)). Residue 176–183 (DEVGLGKT) participates in ATP binding. A DEAH box motif is present at residues 278-281 (DEAH). One can recognise a Helicase C-terminal domain in the interval 491-641 (RVDWLIEFLK…AFELTCPSGH (151 aa)).

Belongs to the SNF2/RAD54 helicase family. RapA subfamily. In terms of assembly, interacts with the RNAP. Has a higher affinity for the core RNAP than for the holoenzyme. Its ATPase activity is stimulated by binding to RNAP.

In terms of biological role, transcription regulator that activates transcription by stimulating RNA polymerase (RNAP) recycling in case of stress conditions such as supercoiled DNA or high salt concentrations. Probably acts by releasing the RNAP, when it is trapped or immobilized on tightly supercoiled DNA. Does not activate transcription on linear DNA. Probably not involved in DNA repair. The polypeptide is RNA polymerase-associated protein RapA (Shewanella baltica (strain OS185)).